The chain runs to 193 residues: dCTP deaminase (193 aa).

Residues 110–115 (RSSLAR), Asp128, 136–138 (VLE), Tyr171, Lys178, and Gln182 each bind dCTP. Glu138 functions as the Proton donor/acceptor in the catalytic mechanism. The tract at residues 174-193 (RKSAKYKDQQEAVASRISQD) is disordered.

It belongs to the dCTP deaminase family. Homotrimer.

It carries out the reaction dCTP + H2O + H(+) = dUTP + NH4(+). It functions in the pathway pyrimidine metabolism; dUMP biosynthesis; dUMP from dCTP (dUTP route): step 1/2. Catalyzes the deamination of dCTP to dUTP. This chain is dCTP deaminase, found in Shewanella baltica (strain OS223).